Reading from the N-terminus, the 248-residue chain is Pulmonary surfactant-associated protein A (248 aa).

The signal sequence occupies residues 1–17 (MWLRCLALALTLLMVSG). An N-linked (GlcNAc...) asparagine glycan is attached at Asn-20. In terms of domain architecture, Collagen-like spans 28–100 (GNPGIPGTPG…PGERGPPGLP (73 aa)). Residues 29-103 (NPGIPGTPGS…RGPPGLPASL (75 aa)) form a disordered region. 4-hydroxyproline is present on residues Pro-30, Pro-33, Pro-36, Pro-42, Pro-54, Pro-57, Pro-63, Pro-67, and Pro-70. Basic and acidic residues predominate over residues 42–51 (PGRDGRDGVK). Positions 54 to 65 (PGPPGPLGPPGG) are enriched in pro residues. Residues 84-93 (ERGEKGEPGE) are compositionally biased toward basic and acidic residues. Residues 132–248 (LVVGRKVFSS…LQYRLAICEF (117 aa)) form the C-type lectin domain. 2 disulfide bridges follow: Cys-155–Cys-246 and Cys-224–Cys-238. Asn-207 carries an N-linked (GlcNAc...) asparagine glycan. Ca(2+)-binding residues include Glu-215, Arg-217, and Asn-234.

This sequence belongs to the SFTPA family. As to quaternary structure, oligomeric complex of 6 set of homotrimers.

It is found in the secreted. The protein localises to the extracellular space. Its subcellular location is the extracellular matrix. The protein resides in the surface film. Functionally, in presence of calcium ions, it binds to surfactant phospholipids and contributes to lower the surface tension at the air-liquid interface in the alveoli of the mammalian lung and is essential for normal respiration. Enhances the expression of MYO18A/SP-R210 on alveolar macrophages. This is Pulmonary surfactant-associated protein A (SFTPA1) from Canis lupus familiaris (Dog).